The primary structure comprises 213 residues: mRNA-decapping protein OPG121 (213 aa).

N(7)-methyl-GTP contacts are provided by Glu-16 and Arg-50. Positions Lys-30–Leu-209 constitute a Nudix hydrolase domain. The Nudix box signature appears at Gly-111–Asp-132. Mg(2+)-binding residues include Glu-126 and Glu-130. Asp-151 contributes to the N(7)-methyl-GTP binding site. Residue Glu-183 participates in Mg(2+) binding.

The protein belongs to the Nudix hydrolase family. Interacts with the late transcription elongation factor VLTF-4/OPG110. Interacts with the late transcription factors VLTF-1. It depends on Mg(2+) as a cofactor. Requires Mn(2+) as cofactor.

The catalysed reaction is a 5'-end (N(7)-methyl 5'-triphosphoguanosine)-guanosine in mRNA + H2O = a 5'-end phospho-guanosine in mRNA + N(7)-methyl-GDP + 2 H(+). Functionally, acts with RNA polymerase to initiate transcription from late gene promoters. The chain is mRNA-decapping protein OPG121 (OPG121) from Cynomys gunnisoni (Gunnison's prairie dog).